Consider the following 450-residue polypeptide: tRNA modification GTPase MnmE (450 aa).

The (6S)-5-formyl-5,6,7,8-tetrahydrofolate site is built by R26, E84, and K123. In terms of domain architecture, TrmE-type G spans 219–376; it reads GMHVVLVGQP…LKAKLLEMIG (158 aa). N229 is a binding site for K(+). Residues 229 to 234, 248 to 254, 273 to 276, and 357 to 359 contribute to the GTP site; these read NVGKSS, TDIAGTT, DTAG, and SAR. S233 contacts Mg(2+). The K(+) site is built by T248, I250, and T253. T254 lines the Mg(2+) pocket. K450 provides a ligand contact to (6S)-5-formyl-5,6,7,8-tetrahydrofolate.

The protein belongs to the TRAFAC class TrmE-Era-EngA-EngB-Septin-like GTPase superfamily. TrmE GTPase family. As to quaternary structure, homodimer. Heterotetramer of two MnmE and two MnmG subunits. K(+) is required as a cofactor.

It localises to the cytoplasm. Its function is as follows. Exhibits a very high intrinsic GTPase hydrolysis rate. Involved in the addition of a carboxymethylaminomethyl (cmnm) group at the wobble position (U34) of certain tRNAs, forming tRNA-cmnm(5)s(2)U34. In Chromobacterium violaceum (strain ATCC 12472 / DSM 30191 / JCM 1249 / CCUG 213 / NBRC 12614 / NCIMB 9131 / NCTC 9757 / MK), this protein is tRNA modification GTPase MnmE.